The following is a 527-amino-acid chain: Berberine bridge enzyme-like 14 (527 aa).

An N-terminal signal peptide occupies residues 1-23 (MKSSTTQTLIFTVFLLLIPTSFA). Cys-35 and Cys-96 are oxidised to a cystine. N-linked (GlcNAc...) asparagine glycosylation is found at Asn-47, Asn-72, Asn-161, Asn-296, Asn-328, Asn-396, and Asn-481. Residues 74–249 (TTRKPVAIVA…LAWKIKLVPV (176 aa)) enclose the FAD-binding PCMH-type domain. A cross-link (6-(S-cysteinyl)-8alpha-(pros-histidyl)-FAD (His-Cys)) is located at residues 111-174 (HDYDGMSYLS…NLRGFPAGIC (64 aa)).

Belongs to the oxygen-dependent FAD-linked oxidoreductase family. Requires FAD as cofactor. In terms of processing, the FAD cofactor is bound via a bicovalent 6-S-cysteinyl, 8alpha-N1-histidyl FAD linkage.

The protein localises to the secreted. It is found in the cell wall. In Arabidopsis thaliana (Mouse-ear cress), this protein is Berberine bridge enzyme-like 14.